The chain runs to 283 residues: Diaminopimelate epimerase (283 aa).

Substrate contacts are provided by asparagine 13 and asparagine 67. Cysteine 76 serves as the catalytic Proton donor. Substrate contacts are provided by residues 77 to 78 (GN), asparagine 166, asparagine 199, and 217 to 218 (ER). The active-site Proton acceptor is cysteine 226. 227–228 (GT) contributes to the substrate binding site.

Belongs to the diaminopimelate epimerase family. In terms of assembly, homodimer.

It is found in the cytoplasm. It carries out the reaction (2S,6S)-2,6-diaminopimelate = meso-2,6-diaminopimelate. It participates in amino-acid biosynthesis; L-lysine biosynthesis via DAP pathway; DL-2,6-diaminopimelate from LL-2,6-diaminopimelate: step 1/1. Its function is as follows. Catalyzes the stereoinversion of LL-2,6-diaminopimelate (L,L-DAP) to meso-diaminopimelate (meso-DAP), a precursor of L-lysine and an essential component of the bacterial peptidoglycan. In Desulforapulum autotrophicum (strain ATCC 43914 / DSM 3382 / VKM B-1955 / HRM2) (Desulfobacterium autotrophicum), this protein is Diaminopimelate epimerase.